The chain runs to 119 residues: Basic phospholipase A2 (119 aa).

7 cysteine pairs are disulfide-bonded: C11–C71, C27–C118, C29–C45, C44–C99, C51–C92, C60–C85, and C78–C90. Ca(2+) is bound by residues Y28, G30, and G32. H48 is a catalytic residue. Ca(2+) is bound at residue D49. D93 is a catalytic residue.

It belongs to the phospholipase A2 family. Group I subfamily. D49 sub-subfamily. It depends on Ca(2+) as a cofactor. Expressed by the venom gland.

The protein localises to the secreted. It carries out the reaction a 1,2-diacyl-sn-glycero-3-phosphocholine + H2O = a 1-acyl-sn-glycero-3-phosphocholine + a fatty acid + H(+). Its function is as follows. Snake venom phospholipase A2 (PLA2) that has several activities. It is myotoxic, has weak anticoagulant activity and inhibits neuromuscular transmission by blocking acetylcholine release from the nerve termini. PLA2 catalyzes the calcium-dependent hydrolysis of the 2-acyl groups in 3-sn-phosphoglycerides. This chain is Basic phospholipase A2, found in Hydrophis schistosus (Beaked sea snake).